We begin with the raw amino-acid sequence, 1015 residues long: Putative calcium-transporting ATPase 7, plasma membrane-type (1015 aa).

An N-acetylmethionine modification is found at methionine 1. Residues 1 to 161 (MESYLNSNFD…NKFAESELRS (161 aa)) are Cytoplasmic-facing. The segment at 20 to 31 (VLEKWRNLCSVV) is interaction with calmodulin. Serine 45 is subject to Phosphoserine; by CPK. Residues 162 to 182 (FWVFVWEALQDMTLMILGVCA) traverse the membrane as a helical segment. Residues 183-200 (FVSLIVGIATEGWPQGSH) are Lumenal-facing. Residues 201–221 (DGLGIVASILLVVFVTATSDY) form a helical membrane-spanning segment. The Cytoplasmic portion of the chain corresponds to 222 to 349 (RQSLQFRDLD…DDETPLQVKL (128 aa)). Residues 350–369 (NGVATIIGKIGLSFAIVTFA) traverse the membrane as a helical segment. Over 370 to 399 (VLVQGMFMRKLSLGPHWWWSGDDALELLEY) the chain is Lumenal. A helical transmembrane segment spans residues 400–417 (FAIAVTIVVVAVPEGLPL). Residues 418-811 (AVTLSLAFAM…KWGRSVYINI (394 aa)) lie on the Cytoplasmic side of the membrane. Aspartate 455 acts as the 4-aspartylphosphate intermediate in catalysis. Positions 756 and 760 each coordinate Mg(2+). Residues 812–830 (QKFVQFQLTVNVVALIVNF) form a helical membrane-spanning segment. Over 831-841 (SSACLTGSAPL) the chain is Lumenal. The helical transmembrane segment at 842–862 (TAVQLLWVNMIMDTLGALALA) threads the bilayer. At 863–882 (TEPPNNELMKRMPVGRRGNF) the chain is on the cytoplasmic side. A helical transmembrane segment spans residues 883–905 (ITNAMWRNILGQAVYQFIIIWIL). The Lumenal segment spans residues 906–917 (QAKGKSMFGLVG). Residues 918 to 939 (SDSTLVLNTLIFNCFVFCQVFN) form a helical membrane-spanning segment. At 940–957 (EVSSREMEEIDVFKGILD) the chain is on the cytoplasmic side. Residues 958-979 (NYVFVVVIGATVFFQIIIIEFL) traverse the membrane as a helical segment. Residues 980–989 (GTFASTTPLT) lie on the Lumenal side of the membrane. Residues 990–1011 (IVQWFFSIFVGFLGMPIAAGLK) traverse the membrane as a helical segment. The Cytoplasmic portion of the chain corresponds to 1012 to 1015 (KIPV).

Belongs to the cation transport ATPase (P-type) (TC 3.A.3) family. Type IIB subfamily.

It is found in the membrane. It catalyses the reaction Ca(2+)(in) + ATP + H2O = Ca(2+)(out) + ADP + phosphate + H(+). Activated by calmodulin. This magnesium-dependent enzyme catalyzes the hydrolysis of ATP coupled with the translocation of calcium from the cytosol out of the cell or into organelles. This is Putative calcium-transporting ATPase 7, plasma membrane-type (ACA7) from Arabidopsis thaliana (Mouse-ear cress).